We begin with the raw amino-acid sequence, 525 residues long: G patch domain-containing protein 3 (525 aa).

Residues 264–316 (YLADIPASPCGEPEEEVGKEEEEESHSDEDDDRGEEWERHEALHEDVTGQERT) are disordered. The span at 275–298 (EPEEEVGKEEEEESHSDEDDDRGE) shows a compositional bias: acidic residues. Basic and acidic residues predominate over residues 299–316 (EWERHEALHEDVTGQERT). Residues 410–458 (TKGIGRKVMERQGWAEGQGLGCRCSGVPEALDSDGQHPRCKRGLGYHGE) form the G-patch domain.

As to quaternary structure, interacts with mitochondrial MAVS; the interaction is markedly increased upon viral infection. Expressed in ocular tissues including retinal pigment epithelium, cornea, ciliary muscle and non-pigmented ciliary epithelium. Also expressed in optic nerve, cartilage, skin and lymph node.

It is found in the nucleus. Its subcellular location is the cytoplasm. In terms of biological role, involved in transcriptional regulation. It is able to activate transcription from the CXCR4 promoter and therefore it might control neural crest cell migration involved in ocular and craniofacial development. Is a negative regulator of immune antiviral response, acting via down-regulation of RIG-I-like receptors signaling and inhibition of type I interferon production. The control mechanism involves interaction with mitochondrial MAVS and inhibition of MAVS assembly with downstream proteins implicated in antiviral response, such as TBK1 and TRAF6. The protein is G patch domain-containing protein 3 (GPATCH3) of Homo sapiens (Human).